A 354-amino-acid chain; its full sequence is MPGHLLQEEMTSSYTTTTTTITEPPSESLQKTVPLYLEEDIRPEMKEDIYDPSYQDEEGPPPKLEYVWRNIILMALLHLGALYGLVLVPSSKVYTLLWAFVYYVISIEGIGAGVHRLWSHRTYKARLPLRIFLIIANTMAFQNDVYEWARDHRAHHKFSETYADPHDSRRGFFFSHVGWLLVRKHPAVKEKGGKLDMSDLKAEKLVMFQRRYYKPAILLMCFILPTFVPWYFWGEAFVNSLCVSTFLRYTLVLNATWLVNSAAHLYGYRPYDKNIDPRENALVSLGCLGEGFHNYHHAFPYDYSASEYRWHINFTTFFIDCMAALGLAYDRKKVSKAAVLARIKRTGDGSCKSG.

The interval Met1–Ser28 is disordered. The Cytoplasmic portion of the chain corresponds to Met1 to Val67. A compositionally biased stretch (low complexity) spans Glu8–Ser28. The helical transmembrane segment at Trp68–Val88 threads the bilayer. Asn70 is a substrate binding site. The Lumenal segment spans residues Pro89 to Lys92. A helical transmembrane segment spans residues Val93–Gly113. The Cytoplasmic segment spans residues Val114–Tyr212. Fe cation contacts are provided by His115 and His120. The Histidine box-1 motif lies at His115–His120. Residues Asn143, Arg150, and Asp151 each contribute to the substrate site. Fe cation contacts are provided by His152, His155, and His156. A Histidine box-2 motif is present at residues His152–His156. Arg183 and Lys184 together coordinate substrate. A Phosphoserine modification is found at Ser198. Residues Tyr213 to Phe232 traverse the membrane as a helical segment. Residues Trp233–Ala236 are Lumenal-facing. A helical transmembrane segment spans residues Phe237–Leu258. Trp257 is a binding site for substrate. The Cytoplasmic segment spans residues Val259 to Gly354. Positions 264, 293, 296, and 297 each coordinate Fe cation. The Histidine box-3 signature appears at His293–His297.

This sequence belongs to the fatty acid desaturase type 1 family. It depends on Fe(2+) as a cofactor.

It is found in the endoplasmic reticulum membrane. The enzyme catalyses octadecanoyl-CoA + 2 Fe(II)-[cytochrome b5] + O2 + 2 H(+) = (9Z)-octadecenoyl-CoA + 2 Fe(III)-[cytochrome b5] + 2 H2O. The catalysed reaction is hexadecanoyl-CoA + 2 Fe(II)-[cytochrome b5] + O2 + 2 H(+) = (9Z)-hexadecenoyl-CoA + 2 Fe(III)-[cytochrome b5] + 2 H2O. In terms of biological role, stearoyl-CoA desaturase that utilizes O(2) and electrons from reduced cytochrome b5 to introduce the first double bond into saturated fatty acyl-CoA substrates. Catalyzes the insertion of a cis double bond at the delta-9 position into fatty acyl-CoA substrates including palmitoyl-CoA and stearoyl-CoA. Gives rise to a mixture of 16:1 and 18:1 unsaturated fatty acids. Plays an important role in lipid biosynthesis. Plays an important role in regulating the expression of genes that are involved in lipogenesis and in regulating mitochondrial fatty acid oxidation. Plays an important role in body energy homeostasis. Contributes to the biosynthesis of membrane phospholipids, cholesterol esters and triglycerides. The chain is Stearoyl-CoA desaturase (SCD) from Mesocricetus auratus (Golden hamster).